A 238-amino-acid polypeptide reads, in one-letter code: Orotidine 5'-phosphate decarboxylase (238 aa).

Substrate is bound by residues Asp-10, Lys-32, 59 to 68 (DLKLHDIPNT), Thr-122, Arg-184, Gln-193, Gly-213, and Arg-214. Residue Lys-61 is the Proton donor of the active site.

It belongs to the OMP decarboxylase family. Type 1 subfamily. Homodimer.

The enzyme catalyses orotidine 5'-phosphate + H(+) = UMP + CO2. Its pathway is pyrimidine metabolism; UMP biosynthesis via de novo pathway; UMP from orotate: step 2/2. Catalyzes the decarboxylation of orotidine 5'-monophosphate (OMP) to uridine 5'-monophosphate (UMP). The protein is Orotidine 5'-phosphate decarboxylase of Bacillus cytotoxicus (strain DSM 22905 / CIP 110041 / 391-98 / NVH 391-98).